Reading from the N-terminus, the 392-residue chain is L-lactate dehydrogenase (392 aa).

The FMN hydroxy acid dehydrogenase domain maps to M1–A380. Y24 lines the substrate pocket. S106 and Q127 together coordinate FMN. Y129 contacts substrate. An FMN-binding site is contributed by T155. R164 lines the substrate pocket. K251 contacts FMN. H275 acts as the Proton acceptor in catalysis. R278 is a binding site for substrate. D306–R330 lines the FMN pocket.

The protein belongs to the FMN-dependent alpha-hydroxy acid dehydrogenase family. The cofactor is FMN.

The protein resides in the cell inner membrane. The catalysed reaction is (S)-lactate + A = pyruvate + AH2. Functionally, catalyzes the conversion of L-lactate to pyruvate. Is coupled to the respiratory chain. The chain is L-lactate dehydrogenase from Chromohalobacter salexigens (strain ATCC BAA-138 / DSM 3043 / CIP 106854 / NCIMB 13768 / 1H11).